The sequence spans 258 residues: Pimeloyl-[acyl-carrier protein] methyl ester esterase (258 aa).

One can recognise an AB hydrolase-1 domain in the interval 16 to 242 (LVLLHGWGLN…AAHAPFISHP (227 aa)). Substrate is bound by residues Trp-22, 82-83 (SL), and 143-147 (FLALQ). Ser-82 functions as the Nucleophile in the catalytic mechanism. Active-site residues include Asp-207 and His-235. His-235 contributes to the substrate binding site.

It belongs to the AB hydrolase superfamily. Carboxylesterase BioH family. In terms of assembly, monomer.

The protein resides in the cytoplasm. It catalyses the reaction 6-carboxyhexanoyl-[ACP] methyl ester + H2O = 6-carboxyhexanoyl-[ACP] + methanol + H(+). It functions in the pathway cofactor biosynthesis; biotin biosynthesis. Its function is as follows. The physiological role of BioH is to remove the methyl group introduced by BioC when the pimeloyl moiety is complete. It allows to synthesize pimeloyl-ACP via the fatty acid synthetic pathway through the hydrolysis of the ester bonds of pimeloyl-ACP esters. This is Pimeloyl-[acyl-carrier protein] methyl ester esterase from Edwardsiella ictaluri (strain 93-146).